Reading from the N-terminus, the 181-residue chain is MGYPGKNTKGYEAPKRPFEKQRIEDETRIVIEYGLRNKREVWRAQSVLRRYRKAARELLAFMSQSSDEQQIATKKEHLLGHLNRIGLLGPDADIGDVLSLKIQQPLERRLQTMVYRQGLARSPKQARQMVTHGHIAIAGRRVDIPSYRVPRDQETLISYYGTSPLTSEGHPEIERINKKRR.

Positions 108–177 constitute an S4 RNA-binding domain; it reads RRLQTMVYRQ…EGHPEIERIN (70 aa). The segment at 161–181 is disordered; the sequence is GTSPLTSEGHPEIERINKKRR. Over residues 169–181 the composition is skewed to basic and acidic residues; it reads GHPEIERINKKRR.

This sequence belongs to the universal ribosomal protein uS4 family. Part of the 30S ribosomal subunit. Contacts protein S5. The interaction surface between S4 and S5 is involved in control of translational fidelity.

In terms of biological role, one of the primary rRNA binding proteins, it binds directly to 16S rRNA where it nucleates assembly of the body of the 30S subunit. With S5 and S12 plays an important role in translational accuracy. The sequence is that of Small ribosomal subunit protein uS4 from Methanosphaerula palustris (strain ATCC BAA-1556 / DSM 19958 / E1-9c).